A 1383-amino-acid polypeptide reads, in one-letter code: Periaxin (1383 aa).

The residue at position 7 (S7) is a Phosphoserine. The region spanning 16–99 (LVEIIVETEA…YKVSFCLKRT (84 aa)) is the PDZ domain. Positions 70–84 (VFFENFKYEDALRLL) match the Nuclear export signal motif. Residues S133 and S243 each carry the phosphoserine modification. 46 tandem repeats follow at residues 432–436 (GPEVK), 440–444 (GPEVK), 448–452 (VPEIK), 456–460 (APEAA), 461–465 (IPDVQ), 466–470 (LPEVQ), 474–478 (MSDMK), 482–486 (IPEMA), 487–491 (VPDVH), 492–496 (LPEVK), 497–501 (LPKVP), 502–506 (EMKVP), 507–511 (EMKLP), 515–519 (EMAVP), 523–527 (LPDIQ), 531–535 (VPEMK), 536–540 (LPDMK), 544–548 (VPEMA), 549–553 (VPDVH), 554–558 (LPDIQ), 562–566 (VPEMK), 567–571 (LPDMK), 575–579 (VPEMA), 580–584 (VPDVR), 585–589 (IPEVQ), 593–597 (VSEVK), 601–605 (IPDMA), 606–610 (VPDVR), 611–615 (LPELQ), 619–623 (MSEVK), 627–631 (IPDMA), 632–636 (VPDVR), 637–641 (LPEVQ), 645–649 (VSELK), 653–657 (VPEMT), 658–662 (MPDIR), 663–667 (LPEVQ), 671–675 (VPDIK), 676–680 (LPEIK), 684–688 (VPEMA), 689–693 (VPDVP), 694–698 (LPELQ), 699–703 (LPKVP), 705–709 (VPDVH), 713–717 (VPEMK), and 718–722 (LPKVP). Residues 432–722 (GPEVKAPKGP…VPEMKLPKVP (291 aa)) form a 46 X 5 AA approximate tandem repeats of [LVMGIE]-[PSM]-[EDKA]-[LIVMA]-[AQKHPRT]; that may have a tripeptide spacer of [ALKD]-[IPV]-[KPH] region. A phosphoserine mark is found at S838, S971, S1020, S1271, S1275, S1277, S1285, S1323, and S1329. Residues 1251-1383 (KVKSPKLRLP…RIEGTQAAAI (133 aa)) form a disordered region. Positions 1267–1277 (SESASGEGSPS) are enriched in low complexity. Residues 1346–1355 (GSKDREEGGF) show a composition bias toward basic and acidic residues. S1361 carries the post-translational modification Phosphoserine.

The protein belongs to the periaxin family. Homodimer (via PDZ domain). Interacts with SCN10A. Found in a complex with SCN10A. Interacts with DRP2. Identified in a dystroglycan complex that contains at least PRX, DRP2, UTRN, DMD and DAG1. Detected in a complex composed of at least EZR, AHNAK, PPL and PRX. Identified in a complex with EZR, AHNAK, BFSP1, BFSP2, ANK2, PLEC, VIM and spectrin. The N-terminus is blocked. Detected in sciatic nerve and in trigeminal nerve Schwann cells. Detected in myelinating Schwann cells in sciatic nerve (at protein level).

The protein resides in the nucleus. It localises to the cytoplasm. Its subcellular location is the cell membrane. It is found in the cell junction. Functionally, scaffolding protein that functions as part of a dystroglycan complex in Schwann cells, and as part of EZR and AHNAK-containing complexes in eye lens fiber cells. Required for the maintenance of the peripheral myelin sheath that is essential for normal transmission of nerve impulses and normal perception of sensory stimuli. Required for normal transport of MBP mRNA from the perinuclear to the paranodal regions. Required for normal remyelination after nerve injury. Required for normal elongation of Schwann cells and normal length of the internodes between the nodes of Ranvier. The demyelinated nodes of Ranvier permit saltatory transmission of nerve impulses; shorter internodes cause slower transmission of nerve impulses. Required for the formation of appositions between the abaxonal surface of the myelin sheath and the Schwann cell plasma membrane; the Schwann cell cytoplasm is restricted to regions between these appositions. Required for the formation of Cajal bands and of Schmidt-Lanterman incisures that correspond to short, cytoplasm-filled regions on myelinated nerves. Recruits DRP2 to the Schwann cell plasma membrane. Required for normal protein composition of the eye lens fiber cell plasma membrane and normal eye lens fiber cell morphology. The protein is Periaxin (Prx) of Rattus norvegicus (Rat).